The chain runs to 72 residues: MTKEEVLEFPGIVTELLPNATFRVKLENEHEIIAHTAGRMRKNRIRVLAGDKVLVEMTPYDLTKGRITYRFK.

Residues 1-72 enclose the S1-like domain; the sequence is MTKEEVLEFP…TKGRITYRFK (72 aa).

The protein belongs to the IF-1 family. In terms of assembly, component of the 30S ribosomal translation pre-initiation complex which assembles on the 30S ribosome in the order IF-2 and IF-3, IF-1 and N-formylmethionyl-tRNA(fMet); mRNA recruitment can occur at any time during PIC assembly.

Its subcellular location is the cytoplasm. Functionally, one of the essential components for the initiation of protein synthesis. Stabilizes the binding of IF-2 and IF-3 on the 30S subunit to which N-formylmethionyl-tRNA(fMet) subsequently binds. Helps modulate mRNA selection, yielding the 30S pre-initiation complex (PIC). Upon addition of the 50S ribosomal subunit IF-1, IF-2 and IF-3 are released leaving the mature 70S translation initiation complex. This is Translation initiation factor IF-1 from Agrobacterium fabrum (strain C58 / ATCC 33970) (Agrobacterium tumefaciens (strain C58)).